A 154-amino-acid chain; its full sequence is Deoxyuridine 5'-triphosphate nucleotidohydrolase (154 aa).

Residues 68–70 (RSG), Asn-81, and 85–87 (TID) contribute to the substrate site.

The protein belongs to the dUTPase family. Mg(2+) serves as cofactor.

It carries out the reaction dUTP + H2O = dUMP + diphosphate + H(+). It participates in pyrimidine metabolism; dUMP biosynthesis; dUMP from dCTP (dUTP route): step 2/2. Functionally, this enzyme is involved in nucleotide metabolism: it produces dUMP, the immediate precursor of thymidine nucleotides and it decreases the intracellular concentration of dUTP so that uracil cannot be incorporated into DNA. This is Deoxyuridine 5'-triphosphate nucleotidohydrolase from Acidiphilium cryptum (strain JF-5).